We begin with the raw amino-acid sequence, 327 residues long: Glycerol-3-phosphate dehydrogenase [NAD(P)+] (327 aa).

4 residues coordinate NADPH: serine 10, phenylalanine 11, arginine 31, and lysine 108. Sn-glycerol 3-phosphate-binding residues include lysine 108, glycine 136, and serine 138. Residue alanine 140 participates in NADPH binding. Sn-glycerol 3-phosphate-binding residues include lysine 191, aspartate 246, serine 256, arginine 257, and asparagine 258. Lysine 191 functions as the Proton acceptor in the catalytic mechanism. Arginine 257 is a binding site for NADPH. NADPH-binding residues include leucine 281 and glutamate 283.

This sequence belongs to the NAD-dependent glycerol-3-phosphate dehydrogenase family.

It localises to the cytoplasm. The enzyme catalyses sn-glycerol 3-phosphate + NAD(+) = dihydroxyacetone phosphate + NADH + H(+). It carries out the reaction sn-glycerol 3-phosphate + NADP(+) = dihydroxyacetone phosphate + NADPH + H(+). It functions in the pathway membrane lipid metabolism; glycerophospholipid metabolism. Its function is as follows. Catalyzes the reduction of the glycolytic intermediate dihydroxyacetone phosphate (DHAP) to sn-glycerol 3-phosphate (G3P), the key precursor for phospholipid synthesis. This chain is Glycerol-3-phosphate dehydrogenase [NAD(P)+], found in Ehrlichia ruminantium (strain Welgevonden).